The primary structure comprises 238 residues: tRNA (guanine-N(7)-)-methyltransferase (238 aa).

S-adenosyl-L-methionine-binding residues include Glu-68, Glu-93, Asp-120, and Asp-143. Asp-143 is a catalytic residue. Substrate contacts are provided by residues Lys-147, Asp-179, and 216 to 219; that span reads TKFE.

This sequence belongs to the class I-like SAM-binding methyltransferase superfamily. TrmB family.

The enzyme catalyses guanosine(46) in tRNA + S-adenosyl-L-methionine = N(7)-methylguanosine(46) in tRNA + S-adenosyl-L-homocysteine. It participates in tRNA modification; N(7)-methylguanine-tRNA biosynthesis. Its function is as follows. Catalyzes the formation of N(7)-methylguanine at position 46 (m7G46) in tRNA. This is tRNA (guanine-N(7)-)-methyltransferase from Shewanella amazonensis (strain ATCC BAA-1098 / SB2B).